The primary structure comprises 341 residues: Glycerol-3-phosphate dehydrogenase [NAD(P)+] (341 aa).

Positions 14, 15, 35, and 108 each coordinate NADPH. Sn-glycerol 3-phosphate contacts are provided by Lys108 and Gly136. Ala140 lines the NADPH pocket. The sn-glycerol 3-phosphate site is built by Lys191, Asp244, Ser254, Arg255, and Asn256. Catalysis depends on Lys191, which acts as the Proton acceptor. Arg255 provides a ligand contact to NADPH. NADPH contacts are provided by Val279 and Glu281.

The protein belongs to the NAD-dependent glycerol-3-phosphate dehydrogenase family.

It localises to the cytoplasm. The enzyme catalyses sn-glycerol 3-phosphate + NAD(+) = dihydroxyacetone phosphate + NADH + H(+). The catalysed reaction is sn-glycerol 3-phosphate + NADP(+) = dihydroxyacetone phosphate + NADPH + H(+). The protein operates within membrane lipid metabolism; glycerophospholipid metabolism. Its function is as follows. Catalyzes the reduction of the glycolytic intermediate dihydroxyacetone phosphate (DHAP) to sn-glycerol 3-phosphate (G3P), the key precursor for phospholipid synthesis. The protein is Glycerol-3-phosphate dehydrogenase [NAD(P)+] of Pseudomonas fluorescens (strain SBW25).